Consider the following 877-residue polypeptide: G-protein coupled receptor family C group 6 member A (877 aa).

An N-terminal signal peptide occupies residues 1–24; that stretch reads MAGLDLSLVLMLSVLAGVREVSLT. Over 25–567 the chain is Extracellular; it reads QVNQQGVIAP…EYFEWNSGFA (543 aa). N-linked (GlcNAc...) asparagine glycans are attached at residues asparagine 53, asparagine 99, asparagine 135, asparagine 263, asparagine 310, asparagine 322, asparagine 338, and asparagine 358. Position 388 (aspartate 388) interacts with L-lysine. Asparagine 430, asparagine 475, asparagine 484, asparagine 528, and asparagine 548 each carry an N-linked (GlcNAc...) asparagine glycan. A helical transmembrane segment spans residues 568–588; that stretch reads IALLTLAALGILLLISMSALF. Topologically, residues 589-603 are cytoplasmic; that stretch reads FWQRNSLVVKAAGGP. The chain crosses the membrane as a helical span at residues 604–624; it reads LCHLILFSLLGSFISVIFFVG. Over 625-635 the chain is Extracellular; sequence EPSNESCRVRQ. N-linked (GlcNAc...) asparagine glycosylation occurs at asparagine 628. Residues 636–656 traverse the membrane as a helical segment; the sequence is VIFGLSFTLCVSCILVKSLKI. Over 657–676 the chain is Cytoplasmic; sequence LLAFQMNLELKELLRKLYKP. A helical transmembrane segment spans residues 677 to 697; sequence YVIVCMCMGLQVTICTLWLTL. Topologically, residues 698–720 are extracellular; the sequence is HRPFIEKVVQPKSILLECNEGSD. The chain crosses the membrane as a helical span at residues 721-741; sequence LMFGLMLGYIVLLALICFTFA. Residues 742-755 lie on the Cytoplasmic side of the membrane; it reads YKGRKLPQKYNEAK. Residues 756–776 traverse the membrane as a helical segment; that stretch reads FITFGMLIYLMAWVIFIPVHV. Residues 777–782 are Extracellular-facing; sequence TTSGKY. The helical transmembrane segment at 783-803 threads the bilayer; it reads VPAVEVVVILISNYGILSCHF. At 804-877 the chain is on the cytoplasmic side; that stretch reads LPKCYIIIFK…VSVPEIDNVL (74 aa).

Belongs to the G-protein coupled receptor 3 family. In terms of assembly, homodimer; disulfide-linked. In terms of tissue distribution, expressed in olfactory epithelium. Also expressed in gills, tongue, lips and palatal organ. Not expressed in brain, kidney, liver, muscle, intestine, ovary and skin. In olfactory epithelium, it is widely expressed over the apical and medial portions of the olfactory sensory neurons, regions that contain olfactory neurons. Expressed in external epithelia, which contains taste buds and solitary chemosensory cells. On gill rakers, it is widely expressed in the surface epithelium, but excluded from taste buds.

The protein localises to the cell membrane. In terms of biological role, olfactory receptor that is activated by amino acids that act as potent odorants in fish. Most highly activated by basic amino acids such as L-lysine and L-arginine. The chain is G-protein coupled receptor family C group 6 member A (gprc6a) from Carassius auratus (Goldfish).